A 1801-amino-acid chain; its full sequence is U3 small nucleolar RNA-associated protein 10 (1801 aa).

The stretch at Ile582–Lys619 is one HEAT 1 repeat. The next 2 membrane-spanning stretches (helical) occupy residues Ile945 to Asn965 and Ala1001 to Met1021. HEAT repeat units follow at residues Gln1045–His1082, Leu1252–Glu1289, Asn1296–Lys1334, and Ala1757–Glu1794.

It belongs to the HEATR1/UTP10 family. Component of the ribosomal small subunit (SSU) processome.

Its subcellular location is the nucleus. It localises to the nucleolus. The protein resides in the membrane. Its function is as follows. Involved in nucleolar processing of pre-18S ribosomal RNA. Involved in ribosome biosynthesis. The chain is U3 small nucleolar RNA-associated protein 10 from Aspergillus terreus (strain NIH 2624 / FGSC A1156).